Reading from the N-terminus, the 165-residue chain is Crossover junction endodeoxyribonuclease RuvC (165 aa).

Active-site residues include D7, E68, and H142. Mg(2+)-binding residues include D7, E68, and H142.

This sequence belongs to the RuvC family. As to quaternary structure, homodimer which binds Holliday junction (HJ) DNA. The HJ becomes 2-fold symmetrical on binding to RuvC with unstacked arms; it has a different conformation from HJ DNA in complex with RuvA. In the full resolvosome a probable DNA-RuvA(4)-RuvB(12)-RuvC(2) complex forms which resolves the HJ. The cofactor is Mg(2+).

The protein localises to the cytoplasm. The enzyme catalyses Endonucleolytic cleavage at a junction such as a reciprocal single-stranded crossover between two homologous DNA duplexes (Holliday junction).. In terms of biological role, the RuvA-RuvB-RuvC complex processes Holliday junction (HJ) DNA during genetic recombination and DNA repair. Endonuclease that resolves HJ intermediates. Cleaves cruciform DNA by making single-stranded nicks across the HJ at symmetrical positions within the homologous arms, yielding a 5'-phosphate and a 3'-hydroxyl group; requires a central core of homology in the junction. The consensus cleavage sequence is 5'-(A/T)TT(C/G)-3'. Cleavage occurs on the 3'-side of the TT dinucleotide at the point of strand exchange. HJ branch migration catalyzed by RuvA-RuvB allows RuvC to scan DNA until it finds its consensus sequence, where it cleaves and resolves the cruciform DNA. In Anaplasma marginale (strain St. Maries), this protein is Crossover junction endodeoxyribonuclease RuvC.